The primary structure comprises 192 residues: Crossover junction endodeoxyribonuclease RuvC (192 aa).

Catalysis depends on residues Asp-9, Glu-70, and Asp-143. Mg(2+) is bound by residues Asp-9, Glu-70, and Asp-143. The tract at residues 161-192 is disordered; sequence GASVATTGPGSSSLTPAQRAWAEAEAKARRAR. The segment covering 163–176 has biased composition (polar residues); sequence SVATTGPGSSSLTP. Over residues 182–192 the composition is skewed to basic and acidic residues; that stretch reads AEAEAKARRAR.

This sequence belongs to the RuvC family. As to quaternary structure, homodimer which binds Holliday junction (HJ) DNA. The HJ becomes 2-fold symmetrical on binding to RuvC with unstacked arms; it has a different conformation from HJ DNA in complex with RuvA. In the full resolvosome a probable DNA-RuvA(4)-RuvB(12)-RuvC(2) complex forms which resolves the HJ. Requires Mg(2+) as cofactor.

The protein localises to the cytoplasm. It catalyses the reaction Endonucleolytic cleavage at a junction such as a reciprocal single-stranded crossover between two homologous DNA duplexes (Holliday junction).. Its function is as follows. The RuvA-RuvB-RuvC complex processes Holliday junction (HJ) DNA during genetic recombination and DNA repair. Endonuclease that resolves HJ intermediates. Cleaves cruciform DNA by making single-stranded nicks across the HJ at symmetrical positions within the homologous arms, yielding a 5'-phosphate and a 3'-hydroxyl group; requires a central core of homology in the junction. The consensus cleavage sequence is 5'-(A/T)TT(C/G)-3'. Cleavage occurs on the 3'-side of the TT dinucleotide at the point of strand exchange. HJ branch migration catalyzed by RuvA-RuvB allows RuvC to scan DNA until it finds its consensus sequence, where it cleaves and resolves the cruciform DNA. The chain is Crossover junction endodeoxyribonuclease RuvC from Pseudarthrobacter chlorophenolicus (strain ATCC 700700 / DSM 12829 / CIP 107037 / JCM 12360 / KCTC 9906 / NCIMB 13794 / A6) (Arthrobacter chlorophenolicus).